Reading from the N-terminus, the 122-residue chain is Large ribosomal subunit protein uL14 (122 aa).

Belongs to the universal ribosomal protein uL14 family. In terms of assembly, part of the 50S ribosomal subunit. Forms a cluster with proteins L3 and L19. In the 70S ribosome, L14 and L19 interact and together make contacts with the 16S rRNA in bridges B5 and B8.

Binds to 23S rRNA. Forms part of two intersubunit bridges in the 70S ribosome. The protein is Large ribosomal subunit protein uL14 of Borrelia hermsii (strain HS1 / DAH).